Here is a 398-residue protein sequence, read N- to C-terminus: Bifunctional enzyme IspD/IspF (398 aa).

The segment at 1–234 (MAKSQRTAVV…ARLAAQLGDI (234 aa)) is 2-C-methyl-D-erythritol 4-phosphate cytidylyltransferase. The tract at residues 235-398 (RTGTGYDVHA…LPFNEKTWSV (164 aa)) is 2-C-methyl-D-erythritol 2,4-cyclodiphosphate synthase. A divalent metal cation contacts are provided by aspartate 241 and histidine 243. 4-CDP-2-C-methyl-D-erythritol 2-phosphate contacts are provided by residues 241–243 (DVH) and 267–268 (HS). Histidine 275 is an a divalent metal cation binding site. 4-CDP-2-C-methyl-D-erythritol 2-phosphate is bound by residues 289-291 (DIG), 365-368 (TTSE), phenylalanine 372, and arginine 375.

The protein in the N-terminal section; belongs to the IspD/TarI cytidylyltransferase family. IspD subfamily. It in the C-terminal section; belongs to the IspF family. Requires a divalent metal cation as cofactor.

It catalyses the reaction 2-C-methyl-D-erythritol 4-phosphate + CTP + H(+) = 4-CDP-2-C-methyl-D-erythritol + diphosphate. The catalysed reaction is 4-CDP-2-C-methyl-D-erythritol 2-phosphate = 2-C-methyl-D-erythritol 2,4-cyclic diphosphate + CMP. Its pathway is isoprenoid biosynthesis; isopentenyl diphosphate biosynthesis via DXP pathway; isopentenyl diphosphate from 1-deoxy-D-xylulose 5-phosphate: step 2/6. The protein operates within isoprenoid biosynthesis; isopentenyl diphosphate biosynthesis via DXP pathway; isopentenyl diphosphate from 1-deoxy-D-xylulose 5-phosphate: step 4/6. Its function is as follows. Bifunctional enzyme that catalyzes the formation of 4-diphosphocytidyl-2-C-methyl-D-erythritol from CTP and 2-C-methyl-D-erythritol 4-phosphate (MEP) (IspD), and catalyzes the conversion of 4-diphosphocytidyl-2-C-methyl-D-erythritol 2-phosphate (CDP-ME2P) to 2-C-methyl-D-erythritol 2,4-cyclodiphosphate (ME-CPP) with a corresponding release of cytidine 5-monophosphate (CMP) (IspF). This is Bifunctional enzyme IspD/IspF from Bradyrhizobium diazoefficiens (strain JCM 10833 / BCRC 13528 / IAM 13628 / NBRC 14792 / USDA 110).